The primary structure comprises 89 residues: UPF0147 protein Msed_2034 (89 aa).

It belongs to the UPF0147 family.

The polypeptide is UPF0147 protein Msed_2034 (Metallosphaera sedula (strain ATCC 51363 / DSM 5348 / JCM 9185 / NBRC 15509 / TH2)).